The primary structure comprises 29 residues: Toxin Bcg III 15.67 (29 aa).

One can recognise an EGF-like domain in the interval 2 to 29; that stretch reads QGTACTGEHAHSFCLNGGTCRHIQQLGE. Cys6 and Cys21 are joined by a disulfide.

It localises to the secreted. Its subcellular location is the nematocyst. Functionally, has both toxic and EGF activity. The polypeptide is Toxin Bcg III 15.67 (Bunodosoma cangicum (Sea anemone)).